Reading from the N-terminus, the 82-residue chain is Cytochrome c-551 (82 aa).

The heme c site is built by Cys-12, Cys-15, His-16, and Met-61.

Binds 1 heme c group covalently per subunit.

This is a prokaryotic monoheme cytochrome, unreactive with mitochondrial cytochrome C oxidase or reductase. It functions in nitrite and nitrate respiration in Pseudomonas, but it is also found in other bacteria. The polypeptide is Cytochrome c-551 (Pseudomonas denitrificans).